A 163-amino-acid polypeptide reads, in one-letter code: Glycine cleavage system H-like protein gcvH5, mitochondrial (163 aa).

Residues Met1–Tyr23 constitute a mitochondrion transit peptide. Residues Ile50–Lys136 form the Lipoyl-binding domain.

Belongs to the GcvH family.

The protein resides in the mitochondrion. The sequence is that of Glycine cleavage system H-like protein gcvH5, mitochondrial (gcvH5) from Dictyostelium discoideum (Social amoeba).